A 370-amino-acid chain; its full sequence is Cyclic dehypoxanthine futalosine synthase (370 aa).

One can recognise a Radical SAM core domain in the interval 50–295; that stretch reads TTFVIGRNVN…QSSWVTMGPE (246 aa). Cysteine 64, cysteine 68, and cysteine 71 together coordinate [4Fe-4S] cluster.

Belongs to the radical SAM superfamily. MqnC family. The cofactor is [4Fe-4S] cluster.

It carries out the reaction dehypoxanthine futalosine + S-adenosyl-L-methionine = cyclic dehypoxanthinylfutalosinate + 5'-deoxyadenosine + L-methionine + H(+). Its pathway is quinol/quinone metabolism; menaquinone biosynthesis. Functionally, radical SAM enzyme that catalyzes the cyclization of dehypoxanthine futalosine (DHFL) into cyclic dehypoxanthine futalosine (CDHFL), a step in the biosynthesis of menaquinone (MK, vitamin K2). In Halalkalibacterium halodurans (strain ATCC BAA-125 / DSM 18197 / FERM 7344 / JCM 9153 / C-125) (Bacillus halodurans), this protein is Cyclic dehypoxanthine futalosine synthase.